We begin with the raw amino-acid sequence, 1272 residues long: MRIERRFTKPGQSSYAEIEFRKAVSEIKNPDGSVVFRLADIDVPAQFSQVATDVLAQKYFRKAGVPKLLKKVEENDVPSFLWRSVADEKALKELPEAERYGSETDARQVFDRLAGTWAYWGWKGKYFSTEEDASAFKDELAYMLATQRVAPNSPQWFNTGLHWAYGIDGPGQGHFYVDPFTGKLTKSKSAYEHPQPHACFIQSVEDDLVNEGGIMDLWVREARLFKYGSGTGSNFSYLRGEGEKLSGGGKSSGLMSFLKIGDRAAGAIKSGGTTRRAAKMVVVDADHPDIEAYIDWKVNEEQKVAALVTGSKIVAKHLKAIMKACVNCEADNGDCFDPAKNPALKREIRAAKKDMVPENYVKRVIQFAEQGYKDIQFKTYDTDWDSEAYLTVSGQNSNNSVSLKDDFLRAVENDGNWNLTARKDGKVMKTLKARDLWEKISHAAWASADPGLHFNTTMNDWHTSPAEGPIRASNPCSEYMFLDDTACNLASLNLLQFKDAKTKRIDIADYEHAVRLWTVVLEVSVMMAQFPSRQIAERSYEYRTLGLGYANIGGLLMSSGIPYDSDEGRAIAGALTAIMTGVSYATSAEMAGELGPFPSFAPNRDNMLRVIRNHRRAAHGQSEGYEGLSVNPVALIHADCTDQDLVAHATAAWDKALELGEKHGYRNAQTTVIAPTGTIGLVMDCDTTGIEPDFALVKFKKLAGGGYFKIINRAVPESLRSLGYSESQIAEIEAYAVGHGNLNQAPAINPSTLKAKGFTDEKIEAVNAALKSAFDIKFVFNQWTLGADFLKGTLKVSDEQLSDMSFNLLDHLGFAKKDIEAANVHVCGAMTLEGAPFLKNEHLAVFDCANPCGKIGKRYLSVESHIRMMAAAQPFISGAISKTINMPNDATVEDCGAAYMLSWKLALKANALYRDGSKLSQPLNASLVEDEDDEDFVEELIQQPLAQQAVTITEKIVERVIERVSREREKLPNRRQGYTQKATVGGHKVYLRTGEFGDGRIGEIFIDMHKEGAAFRAMMNNFAIAISLGLQYGVPLEEYVEAFTFTKFEPAGMVQGNDAIKNATSILDYVFRELAVSYLGRHDLAHVDTSDFSNTALGKGIQEGKTNLLSTGWTRGYKPTLVSSNEGDRAASEPKGSATAAPARGSANVTSFAGSAARKLEPTVAITTSEIVSFKRDYEERAKELAEEIAEEVIDEVVQEAQQTATALFSDKAAADAASAKAEAKKKENERRMRSIAQGYTGNMCSECQNFTMVRNGTCEKCDTCGATSGCS.

Substrate-binding positions include S153, 198–199, G230, 474–478, and 675–679; these read AC, NPCSE, and PTGTI. C199 and C487 are joined by a disulfide. The Proton acceptor role is filled by N474. C476 serves as the catalytic Cysteine radical intermediate. Catalysis depends on E478, which acts as the Proton acceptor. Residues 1120–1147 form a disordered region; the sequence is TLVSSNEGDRAASEPKGSATAAPARGSA.

Belongs to the ribonucleoside diphosphate reductase class-2 family. Requires adenosylcob(III)alamin as cofactor.

The enzyme catalyses a 2'-deoxyribonucleoside 5'-diphosphate + [thioredoxin]-disulfide + H2O = a ribonucleoside 5'-diphosphate + [thioredoxin]-dithiol. Its function is as follows. Catalyzes the reduction of ribonucleotides to deoxyribonucleotides. May function to provide a pool of deoxyribonucleotide precursors for DNA repair during oxygen limitation and/or for immediate growth after restoration of oxygen. The protein is Vitamin B12-dependent ribonucleotide reductase (nrdJ) of Agrobacterium fabrum (strain C58 / ATCC 33970) (Agrobacterium tumefaciens (strain C58)).